The following is a 101-amino-acid chain: NADH-quinone oxidoreductase subunit K (101 aa).

The next 3 membrane-spanning stretches (helical) occupy residues 4-24 (LAHF…GIFL), 30-50 (IVLL…FVAF), and 61-81 (VFVF…LAIL).

This sequence belongs to the complex I subunit 4L family. In terms of assembly, NDH-1 is composed of 14 different subunits. Subunits NuoA, H, J, K, L, M, N constitute the membrane sector of the complex.

It localises to the cell inner membrane. It catalyses the reaction a quinone + NADH + 5 H(+)(in) = a quinol + NAD(+) + 4 H(+)(out). Functionally, NDH-1 shuttles electrons from NADH, via FMN and iron-sulfur (Fe-S) centers, to quinones in the respiratory chain. The immediate electron acceptor for the enzyme in this species is believed to be ubiquinone. Couples the redox reaction to proton translocation (for every two electrons transferred, four hydrogen ions are translocated across the cytoplasmic membrane), and thus conserves the redox energy in a proton gradient. In Cupriavidus taiwanensis (strain DSM 17343 / BCRC 17206 / CCUG 44338 / CIP 107171 / LMG 19424 / R1) (Ralstonia taiwanensis (strain LMG 19424)), this protein is NADH-quinone oxidoreductase subunit K.